A 619-amino-acid chain; its full sequence is Very-long-chain aldehyde decarbonylase GL1-4 (619 aa).

5 helical membrane-spanning segments follow: residues 45 to 65 (IAFS…QIWI), 94 to 114 (GWDD…LAMP), 126 to 146 (GAVV…YWFH), 178 to 198 (FAEH…TIYL), and 325 to 345 (AWYM…AWIY). In terms of domain architecture, Fatty acid hydroxylase spans 138–272 (VEFLYYWFHR…MPFYDYIYNT (135 aa)).

This sequence belongs to the sterol desaturase family. In terms of assembly, homodimer.

Its subcellular location is the endoplasmic reticulum membrane. It carries out the reaction a long-chain fatty aldehyde + 2 NADPH + O2 + H(+) = a long-chain alkane + formate + 2 NADP(+) + H2O. Aldehyde decarbonylase involved in the conversion of aldehydes to alkanes. Core component of a very-long-chain alkane synthesis complex. The sequence is that of Very-long-chain aldehyde decarbonylase GL1-4 from Oryza sativa subsp. indica (Rice).